Reading from the N-terminus, the 88-residue chain is Large ribosomal subunit protein bL31B (88 aa).

This sequence belongs to the bacterial ribosomal protein bL31 family. Type B subfamily. Part of the 50S ribosomal subunit.

The chain is Large ribosomal subunit protein bL31B from Corynebacterium glutamicum (strain R).